The chain runs to 73 residues: Small ribosomal subunit protein bS18c (73 aa).

This sequence belongs to the bacterial ribosomal protein bS18 family. In terms of assembly, part of the 30S ribosomal subunit.

It localises to the plastid. The protein resides in the chloroplast. This is Small ribosomal subunit protein bS18c from Nephroselmis olivacea (Green alga).